A 286-amino-acid chain; its full sequence is Light-independent protochlorophyllide reductase iron-sulfur ATP-binding protein (286 aa).

ATP is bound by residues 10–15 (GIGKST) and lysine 39. A Mg(2+)-binding site is contributed by serine 14. Cysteine 95 and cysteine 129 together coordinate [4Fe-4S] cluster. 180–181 (NR) is an ATP binding site.

It belongs to the NifH/BchL/ChlL family. As to quaternary structure, homodimer. Protochlorophyllide reductase is composed of three subunits; ChlL, ChlN and ChlB. The cofactor is [4Fe-4S] cluster.

It carries out the reaction chlorophyllide a + oxidized 2[4Fe-4S]-[ferredoxin] + 2 ADP + 2 phosphate = protochlorophyllide a + reduced 2[4Fe-4S]-[ferredoxin] + 2 ATP + 2 H2O. The protein operates within porphyrin-containing compound metabolism; chlorophyll biosynthesis (light-independent). Its function is as follows. Component of the dark-operative protochlorophyllide reductase (DPOR) that uses Mg-ATP and reduced ferredoxin to reduce ring D of protochlorophyllide (Pchlide) to form chlorophyllide a (Chlide). This reaction is light-independent. The L component serves as a unique electron donor to the NB-component of the complex, and binds Mg-ATP. The sequence is that of Light-independent protochlorophyllide reductase iron-sulfur ATP-binding protein from Leptolyngbya boryana (Plectonema boryanum).